A 147-amino-acid chain; its full sequence is Large ribosomal subunit protein uL15 (147 aa).

A disordered region spans residues Met-1–Leu-57. 2 stretches are compositionally biased toward gly residues: residues Arg-21 to Ala-31 and Ser-42 to Gly-52.

This sequence belongs to the universal ribosomal protein uL15 family. In terms of assembly, part of the 50S ribosomal subunit.

Binds to the 23S rRNA. This Desulfosudis oleivorans (strain DSM 6200 / JCM 39069 / Hxd3) (Desulfococcus oleovorans) protein is Large ribosomal subunit protein uL15.